The chain runs to 255 residues: tRNA (guanine-N(1)-)-methyltransferase (255 aa).

S-adenosyl-L-methionine-binding positions include G117 and 137-142 (IGDYVL).

This sequence belongs to the RNA methyltransferase TrmD family. As to quaternary structure, homodimer.

It localises to the cytoplasm. The enzyme catalyses guanosine(37) in tRNA + S-adenosyl-L-methionine = N(1)-methylguanosine(37) in tRNA + S-adenosyl-L-homocysteine + H(+). Functionally, specifically methylates guanosine-37 in various tRNAs. This chain is tRNA (guanine-N(1)-)-methyltransferase, found in Chromobacterium violaceum (strain ATCC 12472 / DSM 30191 / JCM 1249 / CCUG 213 / NBRC 12614 / NCIMB 9131 / NCTC 9757 / MK).